The chain runs to 526 residues: Peptide chain release factor 3 (526 aa).

In terms of domain architecture, tr-type G spans 8 to 277 (NKRRTFAIIS…GLTQWAPAPQ (270 aa)). Residues 17–24 (SHPDAGKT), 85–89 (DTPGH), and 139–142 (NKLD) contribute to the GTP site.

Belongs to the TRAFAC class translation factor GTPase superfamily. Classic translation factor GTPase family. PrfC subfamily.

It is found in the cytoplasm. Increases the formation of ribosomal termination complexes and stimulates activities of RF-1 and RF-2. It binds guanine nucleotides and has strong preference for UGA stop codons. It may interact directly with the ribosome. The stimulation of RF-1 and RF-2 is significantly reduced by GTP and GDP, but not by GMP. This is Peptide chain release factor 3 from Histophilus somni (strain 2336) (Haemophilus somnus).